A 98-amino-acid polypeptide reads, in one-letter code: MSLTYMNMFMAFTISLLGLLMYRSHMMSSLLCLEGMMLSLFVMMTMTILNTHLTLASMIPIILLVFAACEAALGLSLLVMVSTTYGMDYVQNLNLLQC.

A run of 3 helical transmembrane segments spans residues 1–21 (MSLT…GLLM), 29–49 (SLLC…MTIL), and 61–81 (IILL…LVMV).

This sequence belongs to the complex I subunit 4L family. In terms of assembly, core subunit of respiratory chain NADH dehydrogenase (Complex I) which is composed of 45 different subunits.

Its subcellular location is the mitochondrion inner membrane. It catalyses the reaction a ubiquinone + NADH + 5 H(+)(in) = a ubiquinol + NAD(+) + 4 H(+)(out). Its function is as follows. Core subunit of the mitochondrial membrane respiratory chain NADH dehydrogenase (Complex I) which catalyzes electron transfer from NADH through the respiratory chain, using ubiquinone as an electron acceptor. Part of the enzyme membrane arm which is embedded in the lipid bilayer and involved in proton translocation. The sequence is that of NADH-ubiquinone oxidoreductase chain 4L (MT-ND4L) from Chiroderma trinitatum (Little big-eyed bat).